The chain runs to 110 residues: Large ribosomal subunit protein uL22 (110 aa).

It belongs to the universal ribosomal protein uL22 family. In terms of assembly, part of the 50S ribosomal subunit.

In terms of biological role, this protein binds specifically to 23S rRNA; its binding is stimulated by other ribosomal proteins, e.g. L4, L17, and L20. It is important during the early stages of 50S assembly. It makes multiple contacts with different domains of the 23S rRNA in the assembled 50S subunit and ribosome. Functionally, the globular domain of the protein is located near the polypeptide exit tunnel on the outside of the subunit, while an extended beta-hairpin is found that lines the wall of the exit tunnel in the center of the 70S ribosome. The sequence is that of Large ribosomal subunit protein uL22 from Alkaliphilus oremlandii (strain OhILAs) (Clostridium oremlandii (strain OhILAs)).